An 89-amino-acid polypeptide reads, in one-letter code: Small ribosomal subunit protein bS20 (89 aa).

The disordered stretch occupies residues 1–25 (MANTPQSKKRARQLERRTAVNKARR).

It belongs to the bacterial ribosomal protein bS20 family.

Binds directly to 16S ribosomal RNA. The chain is Small ribosomal subunit protein bS20 from Paracoccus denitrificans (strain Pd 1222).